The following is a 606-amino-acid chain: Mitogen-activated protein kinase 20 (606 aa).

The region spanning 25–316 is the Protein kinase domain; that stretch reads FKVQEVIGKG…AEEALADPYF (292 aa). Residues 31–39 and Lys-54 contribute to the ATP site; that span reads IGKGSYGVV. Asp-151 serves as the catalytic Proton acceptor. Thr-187 is subject to Phosphothreonine. A TXY motif is present at residues 187–189; it reads TDY. Phosphotyrosine is present on Tyr-189. A Phosphothreonine modification is found at Thr-192.

The protein belongs to the protein kinase superfamily. CMGC Ser/Thr protein kinase family. MAP kinase subfamily. In terms of processing, dually phosphorylated on Thr-187 and Tyr-189, which activates the enzyme.

The catalysed reaction is L-seryl-[protein] + ATP = O-phospho-L-seryl-[protein] + ADP + H(+). The enzyme catalyses L-threonyl-[protein] + ATP = O-phospho-L-threonyl-[protein] + ADP + H(+). Its activity is regulated as follows. Activated by threonine and tyrosine phosphorylation. The sequence is that of Mitogen-activated protein kinase 20 (MPK20) from Arabidopsis thaliana (Mouse-ear cress).